The following is a 536-amino-acid chain: Cytochrome P450 monooxygenase phqM (536 aa).

Cys464 contacts heme.

The protein belongs to the cytochrome P450 family. Heme is required as a cofactor.

The protein operates within alkaloid biosynthesis. In terms of biological role, cytochrome P450 monooxygenase; part of the gene cluster that mediates the biosynthesis of paraherquamide, a fungal indole alkaloid that belongs to a family of natural products containing a characteristic bicyclo[2.2.2]diazaoctane core. The first steps in the biosynthesis of paraherquamide is the production of the beta-methyl-proline precursor from L-isoleucine. They require oxidation of a terminally hydroxylated L-isoleucine to the corresponding aldehyde by enzymes which have still to be identified. Spontaneous cyclization and dehydration would yield the 4-methyl pyrolline-5-carboxylic acid, which is then reduced by the pyrroline-5-carboxylate reductase phqD leading to the beta-methyl-proline precursor. The next step of paraherquamide biosynthesis involves coupling of beta-methyl-proline and L-tryptophan by the bimodular NRPS phqB, to produce a monooxopiperazine intermediate. The reductase (R) domain of phqB utilizes NADPH for hydride transfer to reduce the thioester bond of the T domain-tethered linear dipeptide to a hemithioaminal intermediate, which spontaneously cleaves the C-S bond to release the aldehyde product. This compound undergoes spontaneous cyclization and dehydration to give a dienamine which is reverse prenylated at C-2 by the reverse prenyltransferase phqJ. The other prenyltransferase present in the cluster, phqI may be a redundant gene in the pathway. During biosynthetic assembly, the key step to produce the polycyclic core is catalyzed by the bifunctional reductase and intramolecular [4+2] Diels-Alderase, phqE, resulting in formation of the [2.2.2] diazaoctane intermediate preparaherquamide. Following formation of preparaherquamide, an indole 2,3-epoxidation-initiated pinacol-like rearrangement is catalyzed by the phqK FAD-dependent monooxygenase. The prenyltransferase phqA, the cytochrome P450 monooxygenase phqL, and the FAD-linked oxidoreductase phqH (or the cytochrome P450 monooxygenase phqM), are proposed to be involved in the formation of the pyran ring. The FAD-dependent monooxygenase phqK is likely responsible for generation of the spiro-oxindole, and the N-methylation is likely mediated by the phqN methyltransferase leading to the isolable natural product paraherquamide F. However, the order of these biosynthetic steps has still to be determined. In late-stage paraherquamide biosynthesis, the third P450 monooxygenase, phqO, is probably responsible for the C-14 hydroxylation, transforming paraherquamide F to paraherquamide G, and paraherquamide E to the final product paraherquamide A. The expansion from the 6-membered ring pyran (in paraherquamides F and G) to the 7-membered dioxepin ring (in paraherquamides A and E) represents a poorly understood but intriguing process that probably involves the 2-oxoglutarate-dependent dioxygenase phqC. Finally, the remaining members of the paraherquamide cluster, including phqI as well as phqM (or phqH), do not have a clearly prescribed role and appear to be redundant. This is Cytochrome P450 monooxygenase phqM from Penicillium fellutanum.